A 316-amino-acid polypeptide reads, in one-letter code: Vacuolar morphogenesis protein 7 (316 aa).

The PX domain occupies 1–124 (MAANSVGKMS…QDFLQLSKPN (124 aa)). A coiled-coil region spans residues 168-186 (RARTKLHKLRERLEQDVQK). Positions 250–312 (MQMVRDQEQE…QIANKKARHF (63 aa)) constitute a t-SNARE coiled-coil homology domain.

Possibly multimeric. Associates with VAM3.

The protein resides in the vacuole. Functionally, essential for proper morphogenesis of the vacuole. May exist as structural reinforcement on the surface of the vacuolar membrane and be required for maintenance against rupture by osmotic pressure. The chain is Vacuolar morphogenesis protein 7 (VAM7) from Saccharomyces cerevisiae (strain ATCC 204508 / S288c) (Baker's yeast).